Reading from the N-terminus, the 299-residue chain is Nucleotide-binding protein RER_30260 (299 aa).

19 to 26 is an ATP binding site; that stretch reads GLSGAGLS. Residue 70 to 73 coordinates GTP; that stretch reads DVRS.

Belongs to the RapZ-like family.

Functionally, displays ATPase and GTPase activities. This Rhodococcus erythropolis (strain PR4 / NBRC 100887) protein is Nucleotide-binding protein RER_30260.